A 154-amino-acid chain; its full sequence is Ribonuclease H (154 aa).

The RNase H type-1 domain occupies 5-147; the sequence is GKSRVAIYTD…ADMLARGEVE (143 aa). Positions 14, 53, 75, and 139 each coordinate Mg(2+).

It belongs to the RNase H family. In terms of assembly, monomer. It depends on Mg(2+) as a cofactor.

The protein resides in the cytoplasm. It carries out the reaction Endonucleolytic cleavage to 5'-phosphomonoester.. In terms of biological role, endonuclease that specifically degrades the RNA of RNA-DNA hybrids. The polypeptide is Ribonuclease H (Anaplasma marginale (strain St. Maries)).